A 500-amino-acid chain; its full sequence is Cytochrome P450 726A27 (500 aa).

A helical; Signal-anchor for type II membrane protein membrane pass occupies residues 7–27 (IPSYPIIFSFFIFIFMLIKIW). Residue Cys-440 participates in heme binding.

It belongs to the cytochrome P450 family. Heme serves as cofactor. As to expression, expressed in mature seeds.

It localises to the membrane. It catalyses the reaction (-)-casbene + reduced [NADPH--hemoprotein reductase] + O2 = 4-hydroxycasbene + oxidized [NADPH--hemoprotein reductase] + H2O + H(+). The catalysed reaction is 8-hydroxycasbene + reduced [NADPH--hemoprotein reductase] + O2 = 4,8-dihydroxycasbene + oxidized [NADPH--hemoprotein reductase] + H2O + H(+). It carries out the reaction 4,8-dihydroxycasbene + reduced [NADPH--hemoprotein reductase] + O2 = 4,5,8-trihydroxycasbene + oxidized [NADPH--hemoprotein reductase] + H2O + H(+). It participates in secondary metabolite biosynthesis; terpenoid biosynthesis. Functionally, involved in the biosynthesis of macrocyclic lathyrane type diterpenoids (also called Euphorbia factors) natural products, including the cyclization route from casbene to jolkinol C, a precursor for ingenol mebutate that is used to treat actinic keratosis, a precancerous skin condition. Catalyzes the hydroxylation of (-)-casbene and 8-hydroxycasbene to produce 4-hydroxycasbene and 4,8-dihydroxycasbene, respectively. The polypeptide is Cytochrome P450 726A27 (Euphorbia lathyris (Caper spurge)).